The primary structure comprises 802 residues: Threonine--tRNA ligase 2, cytoplasmic (802 aa).

The residue at position 2 (alanine 2) is an N-acetylalanine. Coiled coils occupy residues alanine 3–arginine 23 and alanine 76–alanine 96. A compositionally biased stretch (low complexity) spans glutamate 86 to alanine 98. The interval glutamate 86–glutamate 123 is disordered. Positions glutamine 106–glutamate 123 are enriched in basic and acidic residues. In terms of domain architecture, TGS spans aspartate 157–threonine 222. Serine 453 is subject to Phosphoserine. The short motif at lysine 786 to lysine 792 is the Nuclear localization signal element.

Belongs to the class-II aminoacyl-tRNA synthetase family. In terms of assembly, may be a component of the multisynthetase complex (MSC), a large multi-subunit complex which contains at least eight different aminoacyl-tRNA synthetases plus three auxillary subunits AIMP1, AIMP2 and EEF1E1. Interacts with the MSC components EPRS1, AIMP1, AIMP2 and KARS1.

It localises to the cytoplasm. It is found in the nucleus. It carries out the reaction tRNA(Thr) + L-threonine + ATP = L-threonyl-tRNA(Thr) + AMP + diphosphate + H(+). Functionally, catalyzes the attachment of threonine to tRNA(Thr) in a two-step reaction: threonine is first activated by ATP to form Thr-AMP and then transferred to the acceptor end of tRNA(Thr). Also edits incorrectly charged tRNA(Thr) via its editing domain, at the post-transfer stage. In Homo sapiens (Human), this protein is Threonine--tRNA ligase 2, cytoplasmic.